A 392-amino-acid polypeptide reads, in one-letter code: Chorismate synthase (392 aa).

Arg40 and Arg46 together coordinate NADP(+). Residues 135 to 137 (RAS), 256 to 257 (QA), Gly300, 315 to 319 (KPISS), and Arg341 each bind FMN.

Belongs to the chorismate synthase family. As to quaternary structure, homotetramer. FMNH2 is required as a cofactor.

The enzyme catalyses 5-O-(1-carboxyvinyl)-3-phosphoshikimate = chorismate + phosphate. It participates in metabolic intermediate biosynthesis; chorismate biosynthesis; chorismate from D-erythrose 4-phosphate and phosphoenolpyruvate: step 7/7. Functionally, catalyzes the anti-1,4-elimination of the C-3 phosphate and the C-6 proR hydrogen from 5-enolpyruvylshikimate-3-phosphate (EPSP) to yield chorismate, which is the branch point compound that serves as the starting substrate for the three terminal pathways of aromatic amino acid biosynthesis. This reaction introduces a second double bond into the aromatic ring system. The chain is Chorismate synthase from Salinispora tropica (strain ATCC BAA-916 / DSM 44818 / JCM 13857 / NBRC 105044 / CNB-440).